Reading from the N-terminus, the 396-residue chain is Probable sugar efflux transporter (396 aa).

Helical transmembrane passes span 15–35 (VVTL…PVGL), 50–70 (VGIM…PFML), 81–101 (LICL…SWSF), 103–123 (VLVI…SITA), 136–156 (AQAL…GLPL), 170–190 (FFAI…LLPL), 209–229 (PALM…YTAY), 246–266 (FATA…VIFG), 275–295 (ALVS…LPAA), 299–319 (IHLG…GLGM), 333–353 (VAMA…ALVG), and 364–384 (MIGY…IIIF).

The protein belongs to the major facilitator superfamily. SotB (TC 2.A.1.2) family.

The protein resides in the cell inner membrane. In terms of biological role, involved in the efflux of sugars. The physiological role may be the reduction of the intracellular concentration of toxic sugars or sugar metabolites. The sequence is that of Probable sugar efflux transporter from Shigella flexneri serotype 5b (strain 8401).